A 231-amino-acid polypeptide reads, in one-letter code: Orotate phosphoribosyltransferase (231 aa).

Residues K27, 79 to 80 (YK), R106, K107, K110, H112, and 133 to 141 (DDVMTAGTA) each bind 5-phospho-alpha-D-ribose 1-diphosphate. Orotate-binding residues include T137 and R166.

It belongs to the purine/pyrimidine phosphoribosyltransferase family. PyrE subfamily. Homodimer. Mg(2+) serves as cofactor.

The enzyme catalyses orotidine 5'-phosphate + diphosphate = orotate + 5-phospho-alpha-D-ribose 1-diphosphate. It functions in the pathway pyrimidine metabolism; UMP biosynthesis via de novo pathway; UMP from orotate: step 1/2. Its function is as follows. Catalyzes the transfer of a ribosyl phosphate group from 5-phosphoribose 1-diphosphate to orotate, leading to the formation of orotidine monophosphate (OMP). The protein is Orotate phosphoribosyltransferase of Bifidobacterium animalis subsp. lactis (strain AD011).